The sequence spans 271 residues: Formamidopyrimidine-DNA glycosylase (271 aa).

The active-site Schiff-base intermediate with DNA is the Pro-2. Glu-3 acts as the Proton donor in catalysis. Catalysis depends on Lys-57, which acts as the Proton donor; for beta-elimination activity. DNA-binding residues include His-90, Arg-109, and Lys-151. The FPG-type zinc finger occupies His-236–Pro-270. Arg-260 functions as the Proton donor; for delta-elimination activity in the catalytic mechanism.

This sequence belongs to the FPG family. As to quaternary structure, monomer. Requires Zn(2+) as cofactor.

It catalyses the reaction Hydrolysis of DNA containing ring-opened 7-methylguanine residues, releasing 2,6-diamino-4-hydroxy-5-(N-methyl)formamidopyrimidine.. It carries out the reaction 2'-deoxyribonucleotide-(2'-deoxyribose 5'-phosphate)-2'-deoxyribonucleotide-DNA = a 3'-end 2'-deoxyribonucleotide-(2,3-dehydro-2,3-deoxyribose 5'-phosphate)-DNA + a 5'-end 5'-phospho-2'-deoxyribonucleoside-DNA + H(+). Involved in base excision repair of DNA damaged by oxidation or by mutagenic agents. Acts as a DNA glycosylase that recognizes and removes damaged bases. Has a preference for oxidized purines, such as 7,8-dihydro-8-oxoguanine (8-oxoG). Has AP (apurinic/apyrimidinic) lyase activity and introduces nicks in the DNA strand. Cleaves the DNA backbone by beta-delta elimination to generate a single-strand break at the site of the removed base with both 3'- and 5'-phosphates. This is Formamidopyrimidine-DNA glycosylase from Shewanella loihica (strain ATCC BAA-1088 / PV-4).